The sequence spans 340 residues: Ferrochelatase (340 aa).

Residues His189 and Glu292 each coordinate Fe cation.

Belongs to the ferrochelatase family.

Its subcellular location is the cytoplasm. The enzyme catalyses heme b + 2 H(+) = protoporphyrin IX + Fe(2+). The protein operates within porphyrin-containing compound metabolism; protoheme biosynthesis; protoheme from protoporphyrin-IX: step 1/1. In terms of biological role, catalyzes the ferrous insertion into protoporphyrin IX. The chain is Ferrochelatase from Pseudomonas paraeruginosa (strain DSM 24068 / PA7) (Pseudomonas aeruginosa (strain PA7)).